The following is a 189-amino-acid chain: dCTP deaminase (189 aa).

DCTP is bound by residues 112 to 117 (KSTYAR), 136 to 138 (TLE), glutamine 157, tyrosine 171, and glutamine 181. The Proton donor/acceptor role is filled by glutamate 138.

This sequence belongs to the dCTP deaminase family. In terms of assembly, homotrimer.

It carries out the reaction dCTP + H2O + H(+) = dUTP + NH4(+). The protein operates within pyrimidine metabolism; dUMP biosynthesis; dUMP from dCTP (dUTP route): step 1/2. Its function is as follows. Catalyzes the deamination of dCTP to dUTP. The protein is dCTP deaminase of Nitrosospira multiformis (strain ATCC 25196 / NCIMB 11849 / C 71).